Here is a 160-residue protein sequence, read N- to C-terminus: Transcriptional repressor NrdR (160 aa).

Positions 1–11 (MRCPNCNSLDT) are enriched in polar residues. The tract at residues 1-20 (MRCPNCNSLDTQVKDSRPTE) is disordered. A zinc finger spans residues 3-34 (CPNCNSLDTQVKDSRPTEDSSVIRRRRVCIAC). Residues 49–139 (LTVIKRNGRR…VYRNFREAKD (91 aa)) enclose the ATP-cone domain.

This sequence belongs to the NrdR family. Zn(2+) is required as a cofactor.

In terms of biological role, negatively regulates transcription of bacterial ribonucleotide reductase nrd genes and operons by binding to NrdR-boxes. This is Transcriptional repressor NrdR from Rhodopseudomonas palustris (strain BisB5).